Reading from the N-terminus, the 963-residue chain is MATAAETSASEPEAESKAGPKADGEEDEVKAARTRRKVLSRAVAAATYKTMGPAWDQQEEGVSESDGDEYAMASSAESSPGEYEWEYDEEEEKNQLEIERLEEQLSINVYDYNCHVDLIRLLRLEGELTKVRMARQKMSEIFPLTEELWLEWLHDEISMAQDGLDREHVYDLFEKAVKDYICPNIWLEYGQYSVGGIGQKGGLEKVRSVFERALSSVGLHMTKGLALWEAYREFESAIVEAARLEKVHSLFRRQLAIPLYDMEATFAEYEEWSEDPIPESVIQNYNKALQQLEKYKPYEEALLQAEAPRLAEYQAYIDFEMKIGDPARIQLIFERALVENCLVPDLWIRYSQYLDRQLKVKDLVLSVHNRAIRNCPWTVALWSRYLLAMERHGVDHQVISVTFEKALNAGFIQATDYVEIWQAYLDYLRRRVDFKQDSSKELEELRAAFTRALEYLKQEVEERFNESGDPSCVIMQNWARIEARLCNNMQKARELWDSIMTRGNAKYANMWLEYYNLERAHGDTQHCRKALHRAVQCTSDYPEHVCEVLLTMERTEGSLEDWDIAVQKTETRLARVNEQRMKAAEKEAALVQQEEEKAEQRKRARAEKKALKKKKKIRGPEKRGADEDDEKEWGDDEEEQPSKRRRVENSIPAAGETQNVEVAAGPAGKCAAVDVEPPSKQKEKAASLKRDMPKVLHDSSKDSITVFVSNLPYSMQEPDTKLRPLFEACGEVVQIRPIFSNRGDFRGYCYVEFKEEKSALQALEMDRKSVEGRPMFVSPCVDKSKNPDFKVFRYSTSLEKHKLFISGLPFSCTKEELEEICKAHGTVKDLRLVTNRAGKPKGLAYVEYENESQASQAVMKMDGMTIKENIIKVAISNPPQRKVPEKPETRKAPGGPMLLPQTYGARGKGRTQLSLLPRALQRPSAAAPQAENGPAAAPAVAAPAATEAPKMSNADFAKLFLRK.

Residues 1–11 (MATAAETSASE) show a composition bias toward low complexity. Disordered regions lie at residues 1 to 36 (MATAAETSASEPEAESKAGPKADGEEDEVKAARTRR) and 50 to 90 (TMGP…YDEE). An N-acetylalanine modification is found at A2. A mediates interaction with PRPF3 region spans residues 2–351 (ATAAETSASE…LVPDLWIRYS (350 aa)). Residues S10 and S16 each carry the phosphoserine modification. The segment covering 14 to 23 (AESKAGPKAD) has biased composition (basic and acidic residues). Residues 21–46 (KADGEEDEVKAARTRRKVLSRAVAAA) are a coiled coil. Positions 57–69 (QQEEGVSESDGDE) are enriched in acidic residues. The stretch at 82 to 110 (EYEWEYDEEEEKNQLEIERLEEQLSINVY) forms a coiled coil. HAT repeat units lie at residues 126–158 (GELTKVRMARQKMSEIFPLTEELWLEWLHDEIS), 164–195 (LDREHVYDLFEKAVKDYICPNIWLEYGQYSVG), 201–237 (GGLEKVRSVFERALSSVGLHMTKGLALWEAYREFESA), 242–275 (ARLEKVHSLFRRQLAIPLYDMEATFAEYEEWSED), 324–356 (GDPARIQLIFERALVENCLVPDLWIRYSQYLDR), 359–391 (KVKDLVLSVHNRAIRNCPWTVALWSRYLLAMER), 394–430 (VDHQVISVTFEKALNAGFIQATDYVEIWQAYLDYLRR), and 487–520 (NNMQKARELWDSIMTRGNAKYANMWLEYYNLERA). Phosphoserine is present on S215. The interval 487 to 520 (NNMQKARELWDSIMTRGNAKYANMWLEYYNLERA) is required for interaction with USP4. The segment at 537 to 953 (CTSDYPEHVC…AATEAPKMSN (417 aa)) is necessary and sufficient for U6 snRNA binding. Positions 559-619 (LEDWDIAVQK…ALKKKKKIRG (61 aa)) form a coiled coil. A compositionally biased stretch (basic and acidic residues) spans 590–601 (LVQQEEEKAEQR). The segment at 590 to 694 (LVQQEEEKAE…AASLKRDMPK (105 aa)) is disordered. Residues 600 to 670 (QRKRARAEKK…EVAAGPAGKC (71 aa)) form a required for nuclear localization region. Positions 601 to 608 (RKRARAEK) match the Nuclear localization signal motif. Basic residues predominate over residues 602 to 617 (KRARAEKKALKKKKKI). The segment covering 626 to 639 (DEDDEKEWGDDEEE) has biased composition (acidic residues). Phosphoserine is present on S650. The residue at position 657 (T657) is a Phosphothreonine. A compositionally biased stretch (basic and acidic residues) spans 677 to 694 (PPSKQKEKAASLKRDMPK). Residues 704 to 782 (ITVFVSNLPY…RPMFVSPCVD (79 aa)) form the RRM 1 domain. A phosphoserine mark is found at S769, S795, and S852. Positions 801–878 (HKLFISGLPF…NIIKVAISNP (78 aa)) constitute an RRM 2 domain. The disordered stretch occupies residues 878–898 (PPQRKVPEKPETRKAPGGPML). Residues 882–891 (KVPEKPETRK) show a composition bias toward basic and acidic residues. Residue R906 is modified to Omega-N-methylarginine. The tract at residues 920–948 (LQRPSAAAPQAENGPAAAPAVAAPAATEA) is disordered. Residues 925-948 (AAAPQAENGPAAAPAVAAPAATEA) show a composition bias toward low complexity.

As to quaternary structure, component of the 7SK snRNP complex at least composed of P-TEFb (composed of CDK9 and CCNT1/cyclin-T1), HEXIM1, HEXIM2, BCDIN3, SART3 proteins and 7SK and U6 snRNAs. Interacts with AGO1 and AGO2. Interacts with PRPF3 and USP4; the interaction with PRPF3 is direct and recruits USP4 to its substrate PRPF3. Interacts with USP15; the interaction is direct. Interacts with HIV-1 Tat. Ubiquitously expressed.

The protein resides in the nucleus. The protein localises to the nucleoplasm. Its subcellular location is the cajal body. It is found in the nucleus speckle. It localises to the cytoplasm. Its function is as follows. U6 snRNP-binding protein that functions as a recycling factor of the splicing machinery. Promotes the initial reassembly of U4 and U6 snRNPs following their ejection from the spliceosome during its maturation. Also binds U6atac snRNPs and may function as a recycling factor for U4atac/U6atac spliceosomal snRNP, an initial step in the assembly of U12-type spliceosomal complex. The U12-type spliceosomal complex plays a role in the splicing of introns with non-canonical splice sites. May also function as a substrate-targeting factor for deubiquitinases like USP4 and USP15. Recruits USP4 to ubiquitinated PRPF3 within the U4/U5/U6 tri-snRNP complex, promoting PRPF3 deubiquitination and thereby regulating the spliceosome U4/U5/U6 tri-snRNP spliceosomal complex disassembly. May also recruit the deubiquitinase USP15 to histone H2B and mediate histone deubiquitination, thereby regulating gene expression and/or DNA repair. May play a role in hematopoiesis probably through transcription regulation of specific genes including MYC. Regulates Tat transactivation activity through direct interaction. May be a cellular factor for HIV-1 gene expression and viral replication. This is Spliceosome associated factor 3, U4/U6 recycling protein from Homo sapiens (Human).